A 177-amino-acid chain; its full sequence is UPF0114 protein HP_0189 (177 aa).

3 helical membrane-spanning segments follow: residues 15-35 (WLLA…GYVF), 54-74 (LVLS…VLMV), and 145-165 (PIFW…LAAV).

It belongs to the UPF0114 family.

It is found in the cell membrane. The sequence is that of UPF0114 protein HP_0189 from Helicobacter pylori (strain ATCC 700392 / 26695) (Campylobacter pylori).